The sequence spans 376 residues: PqqA peptide cyclase (376 aa).

The Radical SAM core domain maps to 4–219 (VPPPLSVLLE…VETARRSLGD (216 aa)). [4Fe-4S] cluster-binding residues include Cys-18, Cys-22, and Cys-25.

Belongs to the radical SAM superfamily. PqqE family. Interacts with PqqD. The interaction is necessary for activity of PqqE. The cofactor is [4Fe-4S] cluster.

The catalysed reaction is [PQQ precursor protein] + S-adenosyl-L-methionine = E-Y cross-linked-[PQQ precursor protein] + 5'-deoxyadenosine + L-methionine + H(+). The protein operates within cofactor biosynthesis; pyrroloquinoline quinone biosynthesis. Its function is as follows. Catalyzes the cross-linking of a glutamate residue and a tyrosine residue in the PqqA protein as part of the biosynthesis of pyrroloquinoline quinone (PQQ). The protein is PqqA peptide cyclase of Xanthomonas campestris pv. campestris (strain B100).